The primary structure comprises 204 residues: Urease accessory protein UreG (204 aa).

13 to 20 (GPVGSGKT) lines the GTP pocket.

Belongs to the SIMIBI class G3E GTPase family. UreG subfamily. In terms of assembly, homodimer. UreD, UreF and UreG form a complex that acts as a GTP-hydrolysis-dependent molecular chaperone, activating the urease apoprotein by helping to assemble the nickel containing metallocenter of UreC. The UreE protein probably delivers the nickel.

The protein resides in the cytoplasm. Facilitates the functional incorporation of the urease nickel metallocenter. This process requires GTP hydrolysis, probably effectuated by UreG. In Acinetobacter baumannii (strain AB307-0294), this protein is Urease accessory protein UreG.